Consider the following 177-residue polypeptide: Thymidine kinase (177 aa).

Position 11–18 (11–18 (GPMLSGKS)) interacts with ATP. Catalysis depends on Glu83, which acts as the Proton acceptor. Residue Phe113 coordinates substrate. The Zn(2+) site is built by Cys138 and Cys141. 157–161 (IEIIG) serves as a coordination point for substrate. Cys170 and Cys173 together coordinate Zn(2+).

This sequence belongs to the thymidine kinase family. In terms of assembly, homotetramer. Two molecules of substrate bind to each enzyme tetramer.

The catalysed reaction is thymidine + ATP = dTMP + ADP + H(+). Its function is as follows. Phosphorylates thymidine and thymidine analogs, such as azidothymidine (AZT). Part of the salvage pathway for pyrimidine deoxyribonucleotide synthesis. The protein is Thymidine kinase (OPG101) of Monkeypox virus (strain Zaire-96-I-16) (MPX).